Reading from the N-terminus, the 435-residue chain is Diaminobutyrate--2-oxoglutarate transaminase (435 aa).

N6-(pyridoxal phosphate)lysine is present on lysine 266.

Belongs to the class-III pyridoxal-phosphate-dependent aminotransferase family. It depends on pyridoxal 5'-phosphate as a cofactor.

It catalyses the reaction L-2,4-diaminobutanoate + 2-oxoglutarate = L-aspartate 4-semialdehyde + L-glutamate. The protein operates within amine and polyamine biosynthesis; ectoine biosynthesis; L-ectoine from L-aspartate 4-semialdehyde: step 1/3. Its function is as follows. Catalyzes reversively the conversion of L-aspartate beta-semialdehyde (ASA) to L-2,4-diaminobutyrate (DABA) by transamination with L-glutamate. The protein is Diaminobutyrate--2-oxoglutarate transaminase (ectB) of Bordetella bronchiseptica (strain ATCC BAA-588 / NCTC 13252 / RB50) (Alcaligenes bronchisepticus).